A 371-amino-acid chain; its full sequence is MNMDKETEQTLNYLPLGQSDPFGNGNEGTIGDFLGRYCNNPQEISPLTLQSFSLNSQISENFPISGGIRFPPYPGQFGSDREFGSQPTTQESNKSSLLDPDSVSDRVHTTKSNSRKRKSIPSGNGKESPASSSLTASNSKVSGENGGSKGGKRSKQDVAGSSKNGVEKCDSKGDNKDDAKPPEAPKDYIHVRARRGQATDSHSLAERARREKISERMTLLQDLVPGCNRITGKAVMLDEIINYVQSLQRQVEFLSMKLATVNPRMEFNANASLSTEMIQPGESLTQSLYAMACSEQRLPSAYYSLGKNMPRFSDTQFPSNDGFVHTETPGFWENNDLQSIVQMGFGDILQQQSNNNNNNCSEPTLQMKLEP.

3 disordered regions span residues 1-25, 65-206, and 352-371; these read MNMD…FGNG, SGGI…SLAE, and QSNN…KLEP. Residues 85–96 show a composition bias toward polar residues; it reads SQPTTQESNKSS. The span at 128-142 shows a compositional bias: low complexity; it reads SPASSSLTASNSKVS. Residues 165–190 are compositionally biased toward basic and acidic residues; that stretch reads GVEKCDSKGDNKDDAKPPEAPKDYIH. The 51-residue stretch at 197-247 folds into the bHLH domain; sequence QATDSHSLAERARREKISERMTLLQDLVPGCNRITGKAVMLDEIINYVQSL.

Homodimer. Interacts with IBH1. As to expression, expressed constitutively in roots, leaves, stems, and flowers.

It localises to the nucleus. This Arabidopsis thaliana (Mouse-ear cress) protein is Transcription factor bHLH77 (BHLH77).